We begin with the raw amino-acid sequence, 244 residues long: Lipoprotein-releasing system ATP-binding protein LolD (244 aa).

The 226-residue stretch at I19 to V244 folds into the ABC transporter domain. Position 55–62 (G55–S62) interacts with ATP.

Belongs to the ABC transporter superfamily. Lipoprotein translocase (TC 3.A.1.125) family. As to quaternary structure, the complex is composed of two ATP-binding proteins (LolD) and two transmembrane proteins (LolC and LolE).

The protein localises to the cell inner membrane. Its function is as follows. Part of the ABC transporter complex LolCDE involved in the translocation of mature outer membrane-directed lipoproteins, from the inner membrane to the periplasmic chaperone, LolA. Responsible for the formation of the LolA-lipoprotein complex in an ATP-dependent manner. This is Lipoprotein-releasing system ATP-binding protein LolD from Xanthomonas euvesicatoria pv. vesicatoria (strain 85-10) (Xanthomonas campestris pv. vesicatoria).